The chain runs to 268 residues: UPF0328 protein ECU10_1850 (268 aa).

This sequence belongs to the UPF0328 family.

This chain is UPF0328 protein ECU10_1850, found in Encephalitozoon cuniculi (strain GB-M1) (Microsporidian parasite).